A 366-amino-acid polypeptide reads, in one-letter code: Galactoside alpha-(1,2)-fucosyltransferase 1 (366 aa).

Residues 1-8 (MWPLSHRH) lie on the Cytoplasmic side of the membrane. A helical; Signal-anchor for type II membrane protein transmembrane segment spans residues 9 to 25 (LCLAFLLVCVLSAISFF). Residues 26-366 (LHVHQDSFRH…LSPLWTLAEP (341 aa)) are Lumenal-facing. Residues N66, N302, and N328 are each glycosylated (N-linked (GlcNAc...) asparagine).

This sequence belongs to the glycosyltransferase 11 family.

The protein localises to the golgi apparatus. It is found in the golgi stack membrane. It catalyses the reaction a beta-D-galactosyl-(1-&gt;4)-N-acetyl-beta-D-glucosaminyl derivative + GDP-beta-L-fucose = an alpha-L-Fuc-(1-&gt;2)-beta-D-Gal-(1-&gt;4)-beta-D-GlcNAc derivative + GDP + H(+). The catalysed reaction is a ganglioside GA1 + GDP-beta-L-fucose = a ganglioside Fuc-GA1 + GDP + H(+). The enzyme catalyses a beta-D-Gal-(1-&gt;3)-beta-D-GlcNAc-(1-&gt;3)-beta-D-Gal-(1-&gt;4)-beta-D-Glc-(1&lt;-&gt;1')-Cer(d18:1(4E)) + GDP-beta-L-fucose = alpha-L-fucosyl-(1-&gt;2)- beta-D-galactosyl-(1-&gt;3)-N-acetyl-beta-D-glucosaminyl-(1-&gt;3)-beta-D-galactosyl-(1-&gt;4)-beta-D-glucosyl-(1&lt;-&gt;1')-N-acylsphing-4-enine + GDP + H(+). It carries out the reaction a neolactoside nLc4Cer(d18:1(4E)) + GDP-beta-L-fucose = a neolactoside IV(2)-alpha-Fuc-nLc4Cer(d18:1(4E)) + GDP + H(+). It catalyses the reaction a ganglioside GM1 + GDP-beta-L-fucose = a ganglioside Fuc-GM1 + GDP + H(+). The catalysed reaction is beta-D-galactosyl-(1-&gt;3)-N-acetyl-D-galactosamine + GDP-beta-L-fucose = alpha-L-fucosyl-(1-&gt;2)-beta-D-galactosyl-(1-&gt;3)-N-acetyl-D-galactosamine + GDP + H(+). It participates in protein modification; protein glycosylation. Catalyzes the transfer of L-fucose, from a guanosine diphosphate-beta-L-fucose, to the terminal galactose residue of glycoconjugates through an alpha(1,2) linkage leading to H antigen synthesis that is an intermediate substrate in the synthesis of ABO blood group antigens. H antigen is essential for maturation of the glomerular layer of the main olfactory bulb, in cell migration and early cell-cell contacts during tumor associated angiogenesis. Preferentially fucosylates soluble lactose and to a lesser extent fucosylates glycolipids gangliosides GA1 and GM1a. The polypeptide is Galactoside alpha-(1,2)-fucosyltransferase 1 (Alouatta belzebul (Red-handed howler monkey)).